The chain runs to 349 residues: Anthranilate phosphoribosyltransferase (349 aa).

Residues G82, 85-86 (GD), 92-95 (NVSS), 110-118 (KHGNRAVSG), and S122 contribute to the 5-phospho-alpha-D-ribose 1-diphosphate site. G82 lines the anthranilate pocket. S94 is a binding site for Mg(2+). N113 serves as a coordination point for anthranilate. R168 is an anthranilate binding site. The Mg(2+) site is built by D227 and E228.

Belongs to the anthranilate phosphoribosyltransferase family. As to quaternary structure, homodimer. It depends on Mg(2+) as a cofactor.

It catalyses the reaction N-(5-phospho-beta-D-ribosyl)anthranilate + diphosphate = 5-phospho-alpha-D-ribose 1-diphosphate + anthranilate. The protein operates within amino-acid biosynthesis; L-tryptophan biosynthesis; L-tryptophan from chorismate: step 2/5. Catalyzes the transfer of the phosphoribosyl group of 5-phosphorylribose-1-pyrophosphate (PRPP) to anthranilate to yield N-(5'-phosphoribosyl)-anthranilate (PRA). The chain is Anthranilate phosphoribosyltransferase from Pseudomonas paraeruginosa (strain DSM 24068 / PA7) (Pseudomonas aeruginosa (strain PA7)).